Consider the following 410-residue polypeptide: Multifunctional CCA protein (410 aa).

Residues Gly8 and Arg11 each contribute to the ATP site. CTP is bound by residues Gly8 and Arg11. 2 residues coordinate Mg(2+): Glu21 and Asp23. ATP is bound by residues Arg91, Arg137, and Arg140. Residues Arg91, Arg137, and Arg140 each contribute to the CTP site. An HD domain is found at 228 to 329; it reads TGIHVMMALR…LKLFDRLDVW (102 aa).

Belongs to the tRNA nucleotidyltransferase/poly(A) polymerase family. Bacterial CCA-adding enzyme type 1 subfamily. Monomer. Can also form homodimers and oligomers. It depends on Mg(2+) as a cofactor. The cofactor is Ni(2+).

The enzyme catalyses a tRNA precursor + 2 CTP + ATP = a tRNA with a 3' CCA end + 3 diphosphate. It catalyses the reaction a tRNA with a 3' CCA end + 2 CTP + ATP = a tRNA with a 3' CCACCA end + 3 diphosphate. Catalyzes the addition and repair of the essential 3'-terminal CCA sequence in tRNAs without using a nucleic acid template. Adds these three nucleotides in the order of C, C, and A to the tRNA nucleotide-73, using CTP and ATP as substrates and producing inorganic pyrophosphate. tRNA 3'-terminal CCA addition is required both for tRNA processing and repair. Also involved in tRNA surveillance by mediating tandem CCA addition to generate a CCACCA at the 3' terminus of unstable tRNAs. While stable tRNAs receive only 3'-terminal CCA, unstable tRNAs are marked with CCACCA and rapidly degraded. The sequence is that of Multifunctional CCA protein from Tolumonas auensis (strain DSM 9187 / NBRC 110442 / TA 4).